Reading from the N-terminus, the 460-residue chain is MENVAAIILAAGKGTRMKSGLVKVLHPIAGRPMIDWPLEAARGAGAAPVVLVVGHQAEAVRERFQGAGDIACALQAEQLGTGHAVACAAPALAGFSGTVLILCGDTPLLRGGTLTDLLAFHRSQGAAVTVLTARMENPHGYGRVLRDEAGRVLRIVEQKDASPQECSVREINSGIYCMEAGFLFDNIGSLGNDNAQNEFYLTDLVAMAAQKGATCLAMAIEDSDEIMGVNDRAQLAQAARILRRRINRDLMLSGVSLVDPEQTYIDQGVVIGPDTLIHPNCSISGPTQIGNGCQIESGVSISSCRIGDRCRIKAGSVLEDSELRADVAVGPMAHLRPGTVLNDHVKIGNFVETKKTVMGEGSKASHLTYLGDAEIGRDVNIGCGTITCNYDGVKKHRTLIGDNVFVGSDVQLVAPVRVGADSLIAAGTTVTRDVPAGSLAISRTPQVNREGWRIRMKKKT.

Positions 1 to 232 (MENVAAIILA…SDEIMGVNDR (232 aa)) are pyrophosphorylase. UDP-N-acetyl-alpha-D-glucosamine is bound by residues 9-12 (LAAG), Lys23, Gln75, and 80-81 (GT). Asp105 is a Mg(2+) binding site. Residues Gly142, Glu157, Asn172, and Asn230 each coordinate UDP-N-acetyl-alpha-D-glucosamine. Asn230 provides a ligand contact to Mg(2+). The tract at residues 233–253 (AQLAQAARILRRRINRDLMLS) is linker. Residues 254–460 (GVSLVDPEQT…GWRIRMKKKT (207 aa)) are N-acetyltransferase. UDP-N-acetyl-alpha-D-glucosamine is bound by residues Arg336 and Lys354. Residue His366 is the Proton acceptor of the active site. 2 residues coordinate UDP-N-acetyl-alpha-D-glucosamine: Tyr369 and Asn380. Acetyl-CoA-binding positions include 389-390 (NY), Ser408, Ala426, and Arg443.

It in the N-terminal section; belongs to the N-acetylglucosamine-1-phosphate uridyltransferase family. This sequence in the C-terminal section; belongs to the transferase hexapeptide repeat family. As to quaternary structure, homotrimer. The cofactor is Mg(2+).

The protein localises to the cytoplasm. The catalysed reaction is alpha-D-glucosamine 1-phosphate + acetyl-CoA = N-acetyl-alpha-D-glucosamine 1-phosphate + CoA + H(+). It catalyses the reaction N-acetyl-alpha-D-glucosamine 1-phosphate + UTP + H(+) = UDP-N-acetyl-alpha-D-glucosamine + diphosphate. Its pathway is nucleotide-sugar biosynthesis; UDP-N-acetyl-alpha-D-glucosamine biosynthesis; N-acetyl-alpha-D-glucosamine 1-phosphate from alpha-D-glucosamine 6-phosphate (route II): step 2/2. It functions in the pathway nucleotide-sugar biosynthesis; UDP-N-acetyl-alpha-D-glucosamine biosynthesis; UDP-N-acetyl-alpha-D-glucosamine from N-acetyl-alpha-D-glucosamine 1-phosphate: step 1/1. The protein operates within bacterial outer membrane biogenesis; LPS lipid A biosynthesis. In terms of biological role, catalyzes the last two sequential reactions in the de novo biosynthetic pathway for UDP-N-acetylglucosamine (UDP-GlcNAc). The C-terminal domain catalyzes the transfer of acetyl group from acetyl coenzyme A to glucosamine-1-phosphate (GlcN-1-P) to produce N-acetylglucosamine-1-phosphate (GlcNAc-1-P), which is converted into UDP-GlcNAc by the transfer of uridine 5-monophosphate (from uridine 5-triphosphate), a reaction catalyzed by the N-terminal domain. In Pelobacter propionicus (strain DSM 2379 / NBRC 103807 / OttBd1), this protein is Bifunctional protein GlmU.